Consider the following 113-residue polypeptide: Large ribosomal subunit protein uL22 (113 aa).

This sequence belongs to the universal ribosomal protein uL22 family. Part of the 50S ribosomal subunit.

This protein binds specifically to 23S rRNA; its binding is stimulated by other ribosomal proteins, e.g. L4, L17, and L20. It is important during the early stages of 50S assembly. It makes multiple contacts with different domains of the 23S rRNA in the assembled 50S subunit and ribosome. Functionally, the globular domain of the protein is located near the polypeptide exit tunnel on the outside of the subunit, while an extended beta-hairpin is found that lines the wall of the exit tunnel in the center of the 70S ribosome. This Stenotrophomonas maltophilia (strain K279a) protein is Large ribosomal subunit protein uL22.